A 208-amino-acid chain; its full sequence is Small ribosomal subunit protein uS4 (208 aa).

One can recognise an S4 RNA-binding domain in the interval 98–163 (SRLDNVVYRA…LTPFVIARAV (66 aa)).

It belongs to the universal ribosomal protein uS4 family. As to quaternary structure, part of the 30S ribosomal subunit. Contacts protein S5. The interaction surface between S4 and S5 is involved in control of translational fidelity.

Functionally, one of the primary rRNA binding proteins, it binds directly to 16S rRNA where it nucleates assembly of the body of the 30S subunit. In terms of biological role, with S5 and S12 plays an important role in translational accuracy. In Acidothermus cellulolyticus (strain ATCC 43068 / DSM 8971 / 11B), this protein is Small ribosomal subunit protein uS4.